The chain runs to 990 residues: Bifunctional glutamine synthetase adenylyltransferase/adenylyl-removing enzyme (990 aa).

Residues 1–474 (MPTDNENSMT…HFNELVEESQ (474 aa)) form an adenylyl removase region. Residues 484–990 (FIACQDAWRL…WDTLFGTCSE (507 aa)) are adenylyl transferase.

Belongs to the GlnE family. The cofactor is Mg(2+).

The catalysed reaction is [glutamine synthetase]-O(4)-(5'-adenylyl)-L-tyrosine + phosphate = [glutamine synthetase]-L-tyrosine + ADP. The enzyme catalyses [glutamine synthetase]-L-tyrosine + ATP = [glutamine synthetase]-O(4)-(5'-adenylyl)-L-tyrosine + diphosphate. Functionally, involved in the regulation of glutamine synthetase GlnA, a key enzyme in the process to assimilate ammonia. When cellular nitrogen levels are high, the C-terminal adenylyl transferase (AT) inactivates GlnA by covalent transfer of an adenylyl group from ATP to specific tyrosine residue of GlnA, thus reducing its activity. Conversely, when nitrogen levels are low, the N-terminal adenylyl removase (AR) activates GlnA by removing the adenylyl group by phosphorolysis, increasing its activity. The regulatory region of GlnE binds the signal transduction protein PII (GlnB) which indicates the nitrogen status of the cell. In Alteromonas mediterranea (strain DSM 17117 / CIP 110805 / LMG 28347 / Deep ecotype), this protein is Bifunctional glutamine synthetase adenylyltransferase/adenylyl-removing enzyme.